The chain runs to 542 residues: Cytochrome P450 27C1 (542 aa).

The N-terminal 80 residues, Met-1–Leu-80, are a transit peptide targeting the mitochondrion. Residues Ala-20–Pro-75 form a disordered region. Over residues Pro-32–Ala-46 the composition is skewed to low complexity. Position 488 (Cys-488) interacts with heme.

Belongs to the cytochrome P450 family. It depends on heme as a cofactor. As to expression, widely expressed, with highest levels in the liver, kidney and pancreas. Expressed in the skin (at protein level).

It localises to the mitochondrion membrane. The enzyme catalyses all-trans-retinol + 2 reduced [adrenodoxin] + O2 + 2 H(+) = all-trans-3,4-didehydroretinol + 2 oxidized [adrenodoxin] + 2 H2O. It catalyses the reaction all-trans-retinol + 2 reduced [adrenodoxin] + O2 + 2 H(+) = all-trans-4-hydroxyretinol + 2 oxidized [adrenodoxin] + H2O. The catalysed reaction is all-trans-retinol + 2 reduced [adrenodoxin] + O2 + 2 H(+) = all-trans-3-hydroxyretinol + 2 oxidized [adrenodoxin] + H2O. Its pathway is cofactor metabolism; retinol metabolism. In terms of biological role, a cytochrome P450 monooxygenase that catalyzes the 3,4 desaturation of all-trans-retinol (also called vitamin A1) to all-trans-3,4-didehydroretinol (also called vitamin A2) in the skin. Desaturates with lower efficiency all-trans retinal and all-trans retinoic acid. Forms minor amounts of 3-hydroxy and 4-hydroxy all-trans-retinol derivatives. Mechanistically, uses molecular oxygen inserting one oxygen atom into a substrate and reducing the second into a water molecule. Two electrons are provided by NADPH via a two-protein mitochondrial transfer system comprising flavoprotein FDXR (adrenodoxin/ferredoxin reductase) and nonheme iron-sulfur protein FDX1 or FDX2 (adrenodoxin/ferredoxin). The protein is Cytochrome P450 27C1 of Homo sapiens (Human).